The following is a 267-amino-acid chain: MNALLSNPFKEGLRKGDTQIGLWLSSTTSYMAEIAATSGYDWLLIDGEHAPNTVQDLYHQLQAIAPYASQPVIRPIEGSKALIKQVLDIGAQTLLIPMVDTAEQARQVVSATRYPPLGQRGVGASVARAARWGRIDNYMAQANESLCLLVQVESKVALENLDAILEVEGIDGVFIGPADLSASLGYPDNAGHPEVQRIIEACIYRIRAAGKAAGFLAVDPAMAQKCLAWGANFVAVGVDTMLYTEALDSRLAMFKSVQSVSTAKRSY.

The active-site Proton acceptor is His49. Gln151 is a binding site for substrate. A Mg(2+)-binding site is contributed by Glu153. Positions 178 and 179 each coordinate substrate. Position 179 (Asp179) interacts with Mg(2+).

The protein belongs to the HpcH/HpaI aldolase family. KDR aldolase subfamily. Homohexamer. It depends on Mg(2+) as a cofactor.

It catalyses the reaction 2-dehydro-3-deoxy-L-rhamnonate = (S)-lactaldehyde + pyruvate. Catalyzes the reversible retro-aldol cleavage of 2-keto-3-deoxy-L-rhamnonate (KDR) to pyruvate and lactaldehyde. This Salmonella agona (strain SL483) protein is 2-keto-3-deoxy-L-rhamnonate aldolase.